We begin with the raw amino-acid sequence, 409 residues long: MKIYKVGGAVRDRLLGIKVTDIDRVVVGATTEEMLAKGFKPVGADFPVFLDPKNGDEYALARTERKSGRGYGGFVFHASPEVTLEEDLIRRDLTINAMAEDDDGNLTDPYHGLRDLEARILRHVSPAFAEDPLRVLRVARFAARYAHLGFTVAPETLELMRQLSESGELEALTPERSWKEISRALMEDQPQVFIQVLRDCAALKTLMPEVDALFGVPQPEAHHPEIDTGVHTLSVLEQAALHKQPLTVRWACLLHDLGKGTTPVDKLPQHIAHEHRGLKLIKAVNERFKVPRDCQELALLVGQYHTHGHRALELKASTLLELLQSFDVYRRPQRFEEFAIACEMDARGRKGLEQRIYPQADYLRGAAKAAREVAVAPLLEKGYKGPELGEALKRERLKALKAYKEQPIL.

Residues G8 and R11 each coordinate ATP. Residues G8 and R11 each coordinate CTP. 2 residues coordinate Mg(2+): D21 and D23. The ATP site is built by R91, R137, and R140. R91, R137, and R140 together coordinate CTP. The 102-residue stretch at T228–Y329 folds into the HD domain.

It belongs to the tRNA nucleotidyltransferase/poly(A) polymerase family. Bacterial CCA-adding enzyme type 1 subfamily. Monomer. Can also form homodimers and oligomers. The cofactor is Mg(2+). Ni(2+) is required as a cofactor.

The catalysed reaction is a tRNA precursor + 2 CTP + ATP = a tRNA with a 3' CCA end + 3 diphosphate. It carries out the reaction a tRNA with a 3' CCA end + 2 CTP + ATP = a tRNA with a 3' CCACCA end + 3 diphosphate. Catalyzes the addition and repair of the essential 3'-terminal CCA sequence in tRNAs without using a nucleic acid template. Adds these three nucleotides in the order of C, C, and A to the tRNA nucleotide-73, using CTP and ATP as substrates and producing inorganic pyrophosphate. tRNA 3'-terminal CCA addition is required both for tRNA processing and repair. Also involved in tRNA surveillance by mediating tandem CCA addition to generate a CCACCA at the 3' terminus of unstable tRNAs. While stable tRNAs receive only 3'-terminal CCA, unstable tRNAs are marked with CCACCA and rapidly degraded. The sequence is that of Multifunctional CCA protein from Pseudomonas fluorescens (strain SBW25).